The sequence spans 105 residues: Large ribosomal subunit protein eL36 (105 aa).

The tract at residues 86 to 105 is disordered; the sequence is QAGKKKRDDIANINRKASAK.

The protein belongs to the eukaryotic ribosomal protein eL36 family.

The sequence is that of Large ribosomal subunit protein eL36 (rpl36) from Dictyostelium discoideum (Social amoeba).